A 161-amino-acid chain; its full sequence is Leucine-rich colipase-like protein 1 (161 aa).

The signal sequence occupies residues M1–Q25.

This is Leucine-rich colipase-like protein 1 (Lrcol1) from Mus musculus (Mouse).